The following is a 32-amino-acid chain: uncharacterized protein (32 aa).

The helical transmembrane segment at 3–23 (IGIIFPVVIFITAVVFLAWFF) threads the bilayer.

Its subcellular location is the cell inner membrane. This is an uncharacterized protein from Escherichia coli (strain K12).